Here is a 118-residue protein sequence, read N- to C-terminus: UPF0102 protein Csac_2148 (118 aa).

The protein belongs to the UPF0102 family.

The polypeptide is UPF0102 protein Csac_2148 (Caldicellulosiruptor saccharolyticus (strain ATCC 43494 / DSM 8903 / Tp8T 6331)).